A 178-amino-acid polypeptide reads, in one-letter code: MSRIGNKPVEIPSGVTVTVNGADVTVKGPKGELKRTFNPEIVVKVEDNTVVVERPSDKKEHRALHGTTRSLISNMVEGVSKGFEKSLELVGVGYRAQKSGQKLVLNVGYSHPVEIVPEKGIEIEVPSNTKVTVKGIDKERVGAVASNIRSVRLPEPYKGKGIRYEGEYVRRKEGKTGK.

The protein belongs to the universal ribosomal protein uL6 family. Part of the 50S ribosomal subunit.

This protein binds to the 23S rRNA, and is important in its secondary structure. It is located near the subunit interface in the base of the L7/L12 stalk, and near the tRNA binding site of the peptidyltransferase center. The protein is Large ribosomal subunit protein uL6 of Halalkalibacterium halodurans (strain ATCC BAA-125 / DSM 18197 / FERM 7344 / JCM 9153 / C-125) (Bacillus halodurans).